Consider the following 501-residue polypeptide: ATP-dependent rRNA helicase RRP3 (501 aa).

Residues Lys3–Glu44 are a coiled coil. The interval Glu36–Ser79 is disordered. Residues Ser43, Ser45, and Ser47 each carry the phosphoserine modification. Residues Glu81–Ser109 carry the Q motif motif. The Helicase ATP-binding domain maps to Ile112–Cys284. ATP is bound at residue Ala125 to Thr132. The DEAD box signature appears at Asp231–Asp234. The region spanning Leu307–Val461 is the Helicase C-terminal domain. A disordered region spans residues Ile480 to Arg501. A compositionally biased stretch (basic and acidic residues) spans Met491 to Arg501.

This sequence belongs to the DEAD box helicase family. DDX47/RRP3 subfamily. Interacts with the SSU processome.

It is found in the nucleus. The enzyme catalyses ATP + H2O = ADP + phosphate + H(+). ATPase activity is stimulated upon the addition of RNA. In terms of biological role, ATP-dependent rRNA helicase required for pre-ribosomal RNA processing. Involved in the maturation of the 35S-pre-rRNA and to its cleavage to mature 18S rRNA. The sequence is that of ATP-dependent rRNA helicase RRP3 from Saccharomyces cerevisiae (strain ATCC 204508 / S288c) (Baker's yeast).